The primary structure comprises 118 residues: Waprin-Enh1 (118 aa).

The N-terminal stretch at 1-24 (MKTLTGLLLVGLLALWIGLPSTSS) is a signal peptide. 2 consecutive WAP domains span residues 25 to 72 (KILF…RSCR) and 74 to 118 (PPVL…RICK). Cystine bridges form between Cys30/Cys63, Cys40/Cys67, Cys50/Cys62, Cys56/Cys71, Cys81/Cys109, Cys88/Cys113, Cys96/Cys108, and Cys102/Cys117.

This sequence belongs to the venom waprin family. As to expression, expressed by the venom gland.

The protein localises to the secreted. Functionally, damages membranes of susceptible bacteria. Has no hemolytic activity. Not toxic to mice. Does not inhibit the proteinases elastase and cathepsin G. The polypeptide is Waprin-Enh1 (Pseudoferania polylepis (Macleay's water snake)).